The sequence spans 864 residues: Disintegrin and metalloproteinase domain-containing protein 15 (864 aa).

The signal sequence occupies residues 1–17 (MRLALLWALGLLGAGSP). Positions 17 to 49 (PRPSPPLPNIGGTEEEQQASPERTQSRSLENQV) are disordered. The propeptide occupies 18–208 (RPSPPLPNIG…EQHHLRRLKR (191 aa)). The span at 34-49 (QASPERTQSRSLENQV) shows a compositional bias: polar residues. The N-linked (GlcNAc...) asparagine glycan is linked to asparagine 57. The Cysteine switch motif lies at 178-185 (HTCAPSWH). Residue cysteine 180 participates in Zn(2+) binding. Residues 209 to 698 (DVVTETKIVE…QLRATSSLTT (490 aa)) are Extracellular-facing. In terms of domain architecture, Peptidase M12B spans 215–416 (KIVELVIVAD…GMGSCLFEWP (202 aa)). An N-linked (GlcNAc...) asparagine glycan is attached at asparagine 239. 4 cysteine pairs are disulfide-bonded: cysteine 325–cysteine 411, cysteine 367–cysteine 395, cysteine 369–cysteine 378, and cysteine 482–cysteine 502. A Zn(2+)-binding site is contributed by histidine 350. Glutamate 351 is an active-site residue. Residues histidine 354 and histidine 360 each contribute to the Zn(2+) site. N-linked (GlcNAc...) asparagine glycosylation is found at asparagine 391 and asparagine 394. The Disintegrin domain occupies 423–510 (SSLCGNMFVD…QCPPDIRLGD (88 aa)). Residues asparagine 608 and asparagine 613 are each glycosylated (N-linked (GlcNAc...) asparagine). Cystine bridges form between cysteine 659–cysteine 669, cysteine 663–cysteine 675, and cysteine 677–cysteine 686. In terms of domain architecture, EGF-like spans 659–687 (CRSKCHGHGVCDSSRHCHCDEGWAPPDCM). The chain crosses the membrane as a helical span at residues 699 to 719 (GLLLSLLLLLVLVLLGASYWY). 2 positions are modified to phosphotyrosine; by HCK and LCK: tyrosine 717 and tyrosine 737. Topologically, residues 720-864 (RARLHQRLCQ…PPPAASSLYL (145 aa)) are cytoplasmic. The disordered stretch occupies residues 738–864 (RAAQSGPPER…PPPAASSLYL (127 aa)). Polar residues predominate over residues 753–765 (RAQQMPGTKQANV). 2 stretches are compositionally biased toward pro residues: residues 768–780 (PVPPSRPLPPNPV) and 810–825 (PQGPTKPPPPRKPLPA). Positions 816 to 822 (PPPPRKP) match the SH3-binding motif. The segment covering 826-850 (NPQGRPPLGDLPGPGDGSLQLVVPS) has biased composition (low complexity). Residues 851–857 (RPAPPPP) carry the SH3-binding motif.

In terms of assembly, interacts with ITAGV-ITGB3 (vitronectin receptor). Interacts with SH3GL2 and SNX9; this interaction occurs preferentially with ADAM15 precursor, rather than the processed form, suggesting it occurs in a secretory pathway compartment prior to the medial Golgi. Interacts with ITAG9-ITGB1. Interacts specifically with Src family protein-tyrosine kinases (PTKs). Interacts with SH3PXD2A. Interacts with ITAGV-ITGB1. Interacts with GRB2, HCK, ITSN1, ITSN2, LYN, MAPK1, MAPK3, NCF1, NCK1, nephrocystin, PTK6, SNX33, LCK and SRC. Zn(2+) serves as cofactor. In terms of processing, the precursor is cleaved by a furin endopeptidase. Post-translationally, phosphorylation increases association with PTKs. As to expression, predominantly expressed in brain, spinal cord, sciatic nerve and lung. Expressed at lower levels in all other tissues. In the peripheral nervous system, expressed predominantly by Schwann cells. In the central nervous system, preferentially expressed by neuronal cells.

The protein localises to the endomembrane system. It is found in the cell junction. The protein resides in the adherens junction. Its subcellular location is the cell projection. It localises to the cilium. The protein localises to the flagellum. It is found in the cytoplasmic vesicle. The protein resides in the secretory vesicle. Its subcellular location is the acrosome. Active metalloproteinase with gelatinolytic and collagenolytic activity. Plays a role in the wound healing process. Mediates both heterotypic intraepithelial cell/T-cell interactions and homotypic T-cell aggregation. Inhibits beta-1 integrin-mediated cell adhesion and migration of airway smooth muscle cells. Suppresses cell motility on or towards fibronectin possibly by driving alpha-v/beta-1 integrin (ITAGV-ITGB1) cell surface expression via ERK1/2 inactivation. Cleaves E-cadherin in response to growth factor deprivation. Plays a role in glomerular cell migration. Plays a role in pathological neovascularization. May play a role in cartilage remodeling. May be proteolytically processed, during sperm epididymal maturation and the acrosome reaction. May play a role in sperm-egg binding through its disintegrin domain. The protein is Disintegrin and metalloproteinase domain-containing protein 15 (Adam15) of Rattus norvegicus (Rat).